The sequence spans 281 residues: L-ornithine N(alpha)-acyltransferase (281 aa).

The protein belongs to the acetyltransferase family. OlsB subfamily.

The enzyme catalyses a (3R)-hydroxyacyl-[ACP] + L-ornithine = a lyso-ornithine lipid + holo-[ACP] + H(+). Its pathway is lipid metabolism. Its function is as follows. Catalyzes the first step in the biosynthesis of ornithine lipids, which are phosphorus-free membrane lipids. Catalyzes the 3-hydroxyacyl-acyl carrier protein-dependent acylation of ornithine to form lyso-ornithine lipid (LOL). The chain is L-ornithine N(alpha)-acyltransferase from Brucella abortus (strain 2308).